Here is a 389-residue protein sequence, read N- to C-terminus: Chorismate synthase (389 aa).

Arginine 39 and arginine 45 together coordinate NADP(+). FMN contacts are provided by residues 130 to 132, 251 to 252, glycine 296, 311 to 315, and arginine 338; these read RSS, NA, and KPIPT.

Belongs to the chorismate synthase family. As to quaternary structure, homotetramer. FMNH2 serves as cofactor.

It carries out the reaction 5-O-(1-carboxyvinyl)-3-phosphoshikimate = chorismate + phosphate. It functions in the pathway metabolic intermediate biosynthesis; chorismate biosynthesis; chorismate from D-erythrose 4-phosphate and phosphoenolpyruvate: step 7/7. Its function is as follows. Catalyzes the anti-1,4-elimination of the C-3 phosphate and the C-6 proR hydrogen from 5-enolpyruvylshikimate-3-phosphate (EPSP) to yield chorismate, which is the branch point compound that serves as the starting substrate for the three terminal pathways of aromatic amino acid biosynthesis. This reaction introduces a second double bond into the aromatic ring system. This Oceanobacillus iheyensis (strain DSM 14371 / CIP 107618 / JCM 11309 / KCTC 3954 / HTE831) protein is Chorismate synthase.